The primary structure comprises 397 residues: Xylose isomerase (397 aa).

Residues His54 and Asp57 contribute to the active site. 7 residues coordinate Mg(2+): Glu181, Glu217, His220, Asp245, Asp255, Asp257, and Asp293.

The protein belongs to the xylose isomerase family. As to quaternary structure, homotetramer. The cofactor is Mg(2+).

Its subcellular location is the cytoplasm. The catalysed reaction is alpha-D-xylose = alpha-D-xylulofuranose. This chain is Xylose isomerase, found in Clavibacter sepedonicus (Clavibacter michiganensis subsp. sepedonicus).